Here is a 2752-residue protein sequence, read N- to C-terminus: Piezo-type mechanosensitive ion channel component 2 (2752 aa).

Residues 1 to 12 (MASEVVCGLIFR) lie on the Cytoplasmic side of the membrane. A helical transmembrane segment spans residues 13-24 (LLLPICLAVACA). Over 25–30 (FRYNGL) the chain is Extracellular. The helical transmembrane segment at 31–43 (SFVYLIYLLLIPL) threads the bilayer. Over 44–50 (FSEPTKT) the chain is Cytoplasmic. Residues 51 to 76 (TMQGHTGRLLKSLCFISLSFLLLHII) traverse the membrane as a helical segment. The Extracellular segment spans residues 77 to 122 (FHITLVSLEAQHRIAPGYNCSTWEKTFRQIGFESLKGADAGNGIRV). N-linked (GlcNAc...) asparagine glycosylation is present at asparagine 95. Residues 123–141 (FVPDIGMFIASLTIWLLCR) traverse the membrane as a helical segment. The Cytoplasmic segment spans residues 142–221 (NIVQKPVTDE…KEFIGNMITT (80 aa)). Residues 222–237 (AGKVVVTILLGSSGMM) form a helical membrane-spanning segment. Over 238 to 240 (LPS) the chain is Extracellular. A helical transmembrane segment spans residues 241-258 (LTSSVYFFVFLGLCTWWS). The Cytoplasmic portion of the chain corresponds to 259 to 264 (WCRTFD). Residues 265 to 287 (PLLFSCLCVLLAIFTAGHLIGLY) form a helical membrane-spanning segment. Over 288 to 335 (LYQFQFFQEAVPPNDYYARLFGIKSVIQTDCSSTWKIIVNPDLSWYHH) the chain is Extracellular. The helical transmembrane segment at 336–355 (ANPILLLVMYYTLATLIRIW) threads the bilayer. The Cytoplasmic segment spans residues 356-492 (LQEPLVQDEG…SIKVHAMVSV (137 aa)). Residues 446 to 478 (STPQYRWEPSDESSEKREEEEEEKEEFEEERSR) form a disordered region. The span at 463 to 474 (EEEEEEKEEFEE) shows a compositional bias: acidic residues. The helical transmembrane segment at 493–514 (FQFIMKQSYICALIAMMAWSIT) threads the bilayer. At 515-519 (YHSWL) the chain is on the extracellular side. A helical membrane pass occupies residues 520 to 531 (TFVLLIWSCTLW). Residues 532-535 (MIRN) are Cytoplasmic-facing. A helical membrane pass occupies residues 536-562 (RRKYAMISSPFMVVYGNLLLILQYIWS). At 563–583 (FELPEIKKVPGFLEKKEPGEL) the chain is on the extracellular side. Residues 584 to 614 (ASKILFTITFWLLLRQHLTEQKALQEKEALL) traverse the membrane as a helical segment. The Cytoplasmic segment spans residues 615-685 (SEVKIGSQEN…GNLVVAMFIK (71 aa)). Positions 623 to 632 (ENEEKDEELQ) are enriched in acidic residues. Positions 623 to 664 (ENEEKDEELQDIQVEGEPKEEEEEEAKEEKQERKKVEQEEAE) are disordered. Residues 649–660 (KEEKQERKKVEQ) show a composition bias toward basic and acidic residues. The chain crosses the membrane as a helical span at residues 686–699 (YWIYVCGGMFFFVS). At 700 to 705 (FEGKIV) the chain is on the extracellular side. The chain crosses the membrane as a helical span at residues 706 to 724 (MYKIIYMVLFLFCVALYQV). Over 725 to 733 (HYEWWRKIL) the chain is Cytoplasmic. Residues 734 to 753 (KYFWMSVVIYTMLVLIFIYT) traverse the membrane as a helical segment. At 754–785 (YQFENFPGLWQNMTGLKKEKLEDLGLKQFTVA) the chain is on the extracellular side. Residues 786-807 (ELFTRIFIPTSFLLVCILHLHY) form a helical membrane-spanning segment. Over 808 to 940 (FHDRFLELTD…QVFMWWILEL (133 aa)) the chain is Cytoplasmic. Serine 838 is subject to Phosphoserine. Basic and acidic residues predominate over residues 862–883 (PGEEKLEGYSEKAQKGDLGKDS). The interval 862 to 902 (PGEEKLEGYSEKAQKGDLGKDSEESEEDGEEEEESEEEEET) is disordered. Acidic residues predominate over residues 884-902 (EESEEDGEEEEESEEEEET). Residues 941–956 (HIIKIVSSYIIWVSVK) traverse the membrane as a helical segment. The Extracellular segment spans residues 957-962 (EVSLFN). A helical membrane pass occupies residues 963 to 972 (YVFLISWAFA). The Cytoplasmic segment spans residues 973–980 (LPYAKLRR). The chain crosses the membrane as a helical span at residues 981–1001 (LASSVCTVWTCVIIVCKMLYQ). Residues 1002–1057 (LQTIKPENFSVNCSLPNENQTNIPFNELNKSLLYSAPIDPTEWVGLRKSSPLLVYL) lie on the Extracellular side of the membrane. Asparagine 1013 carries N-linked (GlcNAc...) asparagine glycosylation. A disulfide bridge connects residues cysteine 1014 and cysteine 1192. A helical transmembrane segment spans residues 1058–1082 (RNNLLMLAILAFEVTIYRHQEYYRG). The Cytoplasmic segment spans residues 1083-1123 (RNNLTAPVSRTIFHDITRLHLDDGLINCAKYFINYFFYKFG). Residues 1124 to 1138 (LETCFLMSVNVIGQR) form a helical membrane-spanning segment. At 1139 to 1140 (MD) the chain is on the extracellular side. Residues 1141 to 1154 (FYAMIHACWLIAVL) traverse the membrane as a helical segment. At 1155–1165 (YRRRRKAIAEI) the chain is on the cytoplasmic side. The chain crosses the membrane as a helical span at residues 1166–1185 (WPKYCCFLACIITFQYFICI). Over 1186 to 1222 (GIPPAPCRDYPWRFKGASFNDNIIKWLYFPDFIVRPN) the chain is Extracellular. Residues 1223–1243 (PVFLVYDFMLLLCASLQRQIF) form a helical membrane-spanning segment. Residues 1244 to 1297 (EDENKAAVRIMAGDNVEICMNLDAASFSQHNPVPDFIHCRSYLDMSKVIIFSYL) lie on the Cytoplasmic side of the membrane. A helical membrane pass occupies residues 1298–1310 (FWFVLTIIFITGT). The Extracellular portion of the chain corresponds to 1311–1316 (TRISIF). Residues 1317–1329 (CMGYLVACFYFLL) form a helical membrane-spanning segment. Residues 1330-1338 (FGGDLLLKP) lie on the Cytoplasmic side of the membrane. A helical transmembrane segment spans residues 1339–1364 (IKSILRYWDWLIAYNVFVITMKNILS). The Extracellular portion of the chain corresponds to 1365-1413 (IGACGYIGTLVHNSCWLIQAFSLACTVKGYQMPAANSPCTLPSGEAGII). The chain crosses the membrane as a helical span at residues 1414–1430 (WDSICFAFLLLQRRVFM). Residues 1431–1921 (SYYFLHVVAD…YAMYNTLVAR (491 aa)) are Cytoplasmic-facing. Residues 1458–1529 (TIVKAVKARI…EREADKQKAK (72 aa)) adopt a coiled-coil conformation. Disordered stretches follow at residues 1488–1534 (QQKY…KKKQ), 1593–1636 (ALRQ…KKSD), and 1844–1868 (SQDDSAGKNRMAVSPDDSRTDKLGS). Residues 1594–1615 (LRQRHKEKKRSAREERKRRRKG) show a composition bias toward basic residues. The chain crosses the membrane as a helical span at residues 1922–1936 (SEMVCYFVIILNHMV). Over 1937-1943 (SASMITL) the chain is Extracellular. The chain crosses the membrane as a helical span at residues 1944 to 1955 (LLPILIFLWAML). Residues 1956-1961 (SVPRPS) are Cytoplasmic-facing. The helical transmembrane segment at 1962 to 1983 (RRFWMMAIVYTEVAIVVKYFFQ) threads the bilayer. Over 1984-2016 (FGFFPWNKNVEVNKDKPYHPPNIIGVEKKEGYV) the chain is Extracellular. A helical transmembrane segment spans residues 2017–2035 (LYDLIQLLALFFHRSILKC). Residues 2036–2189 (HGLWDEDDMT…HPEYSAVTDV (154 aa)) are Cytoplasmic-facing. Disordered stretches follow at residues 2047–2069 (SGMAREESDDELSLGHGRRDSSD) and 2090–2135 (QQTA…SVLS). Residues 2100-2127 (GSSSEPSQRSSFSSNRSQRGSTSTRNSS) show a composition bias toward low complexity. A helical membrane pass occupies residues 2190 to 2209 (YVLMFLADTVDFIIIVFGFW). The Extracellular segment spans residues 2210–2231 (AFGKHSAAADITSSLSEDQVPG). A helical membrane pass occupies residues 2232-2252 (PFLVMVLIQFGTMVVDRALYL). The Cytoplasmic segment spans residues 2253 to 2256 (RKTV). Residues 2257–2280 (LGKVIFQVILVFGIHFWMFFILPG) traverse the membrane as a helical segment. Over 2281–2289 (VTERKFSQN) the chain is Extracellular. Residues 2290-2312 (LVAQLWYFVKCVYFGLSAYQIRC) traverse the membrane as a helical segment. At 2313–2397 (GYPTRVLGNF…YPQPRGQKKK (85 aa)) the chain is on the cytoplasmic side. Residues 2398–2421 (KVVKYGMGGMIIVLLICIVWFPLL) form a helical membrane-spanning segment. The Extracellular segment spans residues 2422–2669 (FMSLIKSVAG…PSLGFLAGYG (248 aa)). The helical transmembrane segment at 2670–2690 (IMGLYASVVLVIGKFVREFFS) threads the bilayer. Residues 2691-2752 (GISHSIMFEE…MIKWTREKTN (62 aa)) lie on the Cytoplasmic side of the membrane.

The protein belongs to the PIEZO (TC 1.A.75) family. Homotrimer; the homotrimer forms a propeller-shaped Piezo channel with a cation-ion conducting pore. Heterotrimeric interaction may occur between PIEZO1 and PIEZO2. Interacts with STOML3. Interacts with TMC7; the interaction inhibits PIEZO2-conducted mechanically activated currents. Interacts with TMC1; the interaction may be part of the MET complex. Interacts with MDFIC (via C-terminus); the interaction prolongs Piezo channel inactivation. Interacts with MDFI (via C-terminus); the interaction prolongs Piezo channel inactivation.

Its subcellular location is the cell membrane. It catalyses the reaction Ca(2+)(in) = Ca(2+)(out). Its activity is regulated as follows. Regulated by auxillary subunits MDFIC and MDFI. Channel activity is inhibited by TMEM120A. Phosphatidic acid and lysophosphatidic acid inhibit PIEZO2 channel activity. Functionally, pore-forming subunit of the mechanosensitive non-specific cation Piezo channel required for rapidly adapting mechanically activated (MA) currents and has a key role in sensing touch and tactile pain. Piezo channels are homotrimeric three-blade propeller-shaped structures that utilize a cap-motion and plug-and-latch mechanism to gate their ion-conducting pathways. Expressed in sensory neurons, is essential for diverse physiological processes, including respiratory control, systemic metabolism, urinary function, and proprioception. Mediates airway stretch sensing, enabling efficient respiration at birth and maintaining normal breathing in adults. It regulates brown and beige adipose tissue morphology and function, preventing systemic hypermetabolism. In the lower urinary tract, acts as a sensor in both the bladder urothelium and innervating sensory neurons being required for bladder-stretch sensing and urethral micturition reflexes, ensuring proper urinary function. Additionally, PIEZO2 serves as the principal mechanotransducer in proprioceptors, facilitating proprioception and coordinated body movements. In inner ear hair cells, PIEZO1/2 subunits may constitute part of the mechanotransducer (MET) non-selective cation channel complex where they may act as pore-forming ion-conducting component in the complex. Required for Merkel-cell mechanotransduction. Plays a major role in light-touch mechanosensation. The chain is Piezo-type mechanosensitive ion channel component 2 from Homo sapiens (Human).